A 234-amino-acid chain; its full sequence is Large ribosomal subunit protein bL25 (234 aa).

This sequence belongs to the bacterial ribosomal protein bL25 family. CTC subfamily. As to quaternary structure, part of the 50S ribosomal subunit; part of the 5S rRNA/L5/L18/L25 subcomplex. Contacts the 5S rRNA. Binds to the 5S rRNA independently of L5 and L18.

This is one of the proteins that binds to the 5S RNA in the ribosome where it forms part of the central protuberance. In Rhodopseudomonas palustris (strain BisA53), this protein is Large ribosomal subunit protein bL25.